Reading from the N-terminus, the 1761-residue chain is 6-methylsalicylic acid synthase AOL_s00215g283 (1761 aa).

A Ketosynthase family 3 (KS3) domain is found at 18-443 (QDDIAIIGMA…GTVAHAVIEQ (426 aa)). Residues Cys-190, His-325, and His-367 each act as for beta-ketoacyl synthase activity in the active site. Residues 554–870 (VWVFSGHGAH…ALGKLHCHGA (317 aa)) form a malonyl-CoA:ACP transacylase (MAT) domain region. Ser-641 functions as the For malonyltransferase activity in the catalytic mechanism. The segment at 918–1038 (HVLLGAKHQV…GHVANNEWSK (121 aa)) is N-terminal hotdog fold. Residues 918 to 1187 (HVLLGAKHQV…NGMRFSAVEG (270 aa)) form a dehydratase (DH) domain region. Positions 918–1191 (HVLLGAKHQV…FSAVEGTPGA (274 aa)) constitute a PKS/mFAS DH domain. Residue His-950 is the Proton acceptor; for dehydratase activity of the active site. The C-terminal hotdog fold stretch occupies residues 1050-1191 (LPSVKPSFAT…FSAVEGTPGA (142 aa)). Asp-1113 (proton donor; for dehydratase activity) is an active-site residue. The tract at residues 1399–1587 (GTYLITGGLG…IVSFLWTSWN (189 aa)) is ketoreductase (KR) domain. The interval 1654-1680 (PRKRAESSGTEAVSKGEVSEKAPVPKS) is disordered. A Carrier domain is found at 1686–1761 (EYLQNAISEC…HLVKWFEEKI (76 aa)). Ser-1721 bears the O-(pantetheine 4'-phosphoryl)serine mark.

It catalyses the reaction 3 malonyl-CoA + acetyl-CoA + NADPH + 3 H(+) = 6-methylsalicylate + 3 CO2 + NADP(+) + 4 CoA + H2O. It participates in secondary metabolite biosynthesis; terpenoid biosynthesis. Functionally, 6-methylsalicylic acid synthase; part of the gene cluster that mediates the biosynthesis of sesquiterpenyl epoxy-cyclohexenoids (SECs) such as anthrobotrisins and arthrosporols, metabolites that possess a novel hybrid carbon skeleton consisting of a polyketide-derived epoxycyclohexenol combined with a terpenoid-derived monocyclic sesquiterpenol substructure (PKS-PTS hybrid). The SEC pathway plays an important role for fungal soil colonization via decreasing fungal nematode-capturing ability. Within the pathway, the polyketide synthase (PKS) AOL_s00215g283 catalyzes the biosynthesis of 6-methylsalicylic acid (6-MSA) via condensation of 1 acetate and 3 malonate units. AOL_s00215g283 performs a series of programmed reactions including Claisen condensation, dehydration, reduction, and cyclization to yield 6-MSA. The pathway begins with the biosynthesis of 6-methylsalicylic acid (6-MSA), the first precursor of the polyketide-derived epoxycyclohexenol in arthrosporols, by the polyketide synthase (PKS) AOL_s00215g283. The 6-methylsalicylic acid decarboxylase AOL_s00215g281 then catalyzes the decarboxylation of 6-methylsalicylic acid to yield m-cresol. The cytochrome P450 monooxygenase AOL_s00215g282 further oxidizes m-cresol to yield toluquinol. With the assistance of the oxidoreductase AOL_s00215g277, the polyprenyl transferase AOL_s00215g276 catalyzes the farnesylation of toluquinol to produce farnesyl hydroquinone, the hybrid precursor for biosynthesis of SECs. Farnesyl hydroquinone undergoes epoxidation and then subsequent dehydrogenation to form farnesyl epoxy-quinone, the first and simplest SEC. The cytochrome P450 monooxygenase AOL_s00215g278 and the FAD-dependent monooxygenase AOL_s00215g279 might be involved in the oxygenation of the phenol moiety, most likely in the epoxy formation. The cytochrome P450 monooxygenases AOL_s00215g274 and AOL_s00215g280 are involved in specific regional ketone reductions at respectively C-4 and C-1 of farnesyl epoxy-quinone PubMed:33823587. The polypeptide is 6-methylsalicylic acid synthase AOL_s00215g283 (Arthrobotrys oligospora (strain ATCC 24927 / CBS 115.81 / DSM 1491) (Nematode-trapping fungus)).